Consider the following 153-residue polypeptide: Small ribosomal subunit protein uS15 (153 aa).

This sequence belongs to the universal ribosomal protein uS15 family. As to quaternary structure, part of the 30S ribosomal subunit.

This Sulfolobus acidocaldarius (strain ATCC 33909 / DSM 639 / JCM 8929 / NBRC 15157 / NCIMB 11770) protein is Small ribosomal subunit protein uS15.